The sequence spans 278 residues: Shikimate dehydrogenase (NADP(+)) (278 aa).

Shikimate contacts are provided by residues 14 to 16 and threonine 61; that span reads SKS. Lysine 65 serves as the catalytic Proton acceptor. The shikimate site is built by asparagine 86 and aspartate 102. NADP(+) is bound by residues 127–131, 151–156, and methionine 221; these read GAGGA and NRTASK. Tyrosine 223 is a shikimate binding site. Glycine 245 is a binding site for NADP(+).

The protein belongs to the shikimate dehydrogenase family. Homodimer.

The enzyme catalyses shikimate + NADP(+) = 3-dehydroshikimate + NADPH + H(+). It participates in metabolic intermediate biosynthesis; chorismate biosynthesis; chorismate from D-erythrose 4-phosphate and phosphoenolpyruvate: step 4/7. Involved in the biosynthesis of the chorismate, which leads to the biosynthesis of aromatic amino acids. Catalyzes the reversible NADPH linked reduction of 3-dehydroshikimate (DHSA) to yield shikimate (SA). The chain is Shikimate dehydrogenase (NADP(+)) from Saccharophagus degradans (strain 2-40 / ATCC 43961 / DSM 17024).